The chain runs to 184 residues: Shikimate kinase (184 aa).

12–17 (GSGKST) contributes to the ATP binding site. A Mg(2+)-binding site is contributed by Ser-16. Substrate is bound by residues Asp-34, Arg-58, and Gly-80. Arg-117 serves as a coordination point for ATP. A substrate-binding site is contributed by Arg-136. ATP is bound at residue Arg-153. Residues 163 to 184 (MSRLDDPTPNTSPSSTASGAAT) form a disordered region. Residues 169 to 184 (PTPNTSPSSTASGAAT) are compositionally biased toward low complexity.

It belongs to the shikimate kinase family. As to quaternary structure, monomer. It depends on Mg(2+) as a cofactor.

Its subcellular location is the cytoplasm. It carries out the reaction shikimate + ATP = 3-phosphoshikimate + ADP + H(+). The protein operates within metabolic intermediate biosynthesis; chorismate biosynthesis; chorismate from D-erythrose 4-phosphate and phosphoenolpyruvate: step 5/7. Catalyzes the specific phosphorylation of the 3-hydroxyl group of shikimic acid using ATP as a cosubstrate. This chain is Shikimate kinase, found in Mycobacterium marinum (strain ATCC BAA-535 / M).